We begin with the raw amino-acid sequence, 143 residues long: Large ribosomal subunit protein uL16 (143 aa).

The span at 1-17 (MLQPKRTKFRKAHKGRI) shows a compositional bias: basic residues. The disordered stretch occupies residues 1–21 (MLQPKRTKFRKAHKGRIHGNA).

Belongs to the universal ribosomal protein uL16 family. As to quaternary structure, part of the 50S ribosomal subunit.

In terms of biological role, binds 23S rRNA and is also seen to make contacts with the A and possibly P site tRNAs. The chain is Large ribosomal subunit protein uL16 from Rhizorhabdus wittichii (strain DSM 6014 / CCUG 31198 / JCM 15750 / NBRC 105917 / EY 4224 / RW1) (Sphingomonas wittichii).